The following is a 272-amino-acid chain: Cytochrome b-c1 complex subunit Rieske-2, mitochondrial (272 aa).

A mitochondrion-targeting transit peptide spans 1–60 (MLRIAGRRASSLSRWPVRSVAPSSSAFISANHFSSDDDSSSPRSISPSLASVFLHHTRGF). Over 61–109 (SSNSVSHAHDMGLVPDLPPTVAAIKNPTSKIVYDEHNHERYPPGDPSKR) the chain is Mitochondrial matrix. Residues 110–132 (AFAYFVLTGGRFVYASLVRLLIL) traverse the membrane as a helical segment. Topologically, residues 133–272 (KFVLSMSASK…FLEENKLLIG (140 aa)) are mitochondrial intermembrane. In terms of domain architecture, Rieske spans 182 to 270 (INLANSVDLG…YSFLEENKLL (89 aa)). Residues cysteine 215, histidine 217, cysteine 234, and histidine 237 each coordinate [2Fe-2S] cluster. A disulfide bridge links cysteine 220 with cysteine 236.

The protein belongs to the Rieske iron-sulfur protein family. As to quaternary structure, component of the ubiquinol-cytochrome c oxidoreductase (cytochrome b-c1 complex, complex III, CIII), a multisubunit enzyme composed of 3 respiratory subunits cytochrome b, cytochrome c1 and Rieske protein, 2 core protein subunits, and several low-molecular weight protein subunits. The complex exists as an obligatory dimer and forms supercomplexes (SCs) in the inner mitochondrial membrane with cytochrome c oxidase (complex IV, CIV). It depends on [2Fe-2S] cluster as a cofactor. As to expression, high levels are seen in the flowers while a low level expression is seen in the roots, leaves and stems.

The protein localises to the mitochondrion inner membrane. The catalysed reaction is a quinol + 2 Fe(III)-[cytochrome c](out) = a quinone + 2 Fe(II)-[cytochrome c](out) + 2 H(+)(out). Its function is as follows. Component of the ubiquinol-cytochrome c oxidoreductase, a multisubunit transmembrane complex that is part of the mitochondrial electron transport chain which drives oxidative phosphorylation. The respiratory chain contains 3 multisubunit complexes succinate dehydrogenase (complex II, CII), ubiquinol-cytochrome c oxidoreductase (cytochrome b-c1 complex, complex III, CIII) and cytochrome c oxidase (complex IV, CIV), that cooperate to transfer electrons derived from NADH and succinate to molecular oxygen, creating an electrochemical gradient over the inner membrane that drives transmembrane transport and the ATP synthase. The cytochrome b-c1 complex catalyzes electron transfer from ubiquinol to cytochrome c, linking this redox reaction to translocation of protons across the mitochondrial inner membrane, with protons being carried across the membrane as hydrogens on the quinol. In the process called Q cycle, 2 protons are consumed from the matrix, 4 protons are released into the intermembrane space and 2 electrons are passed to cytochrome c. The Rieske protein is a catalytic core subunit containing a [2Fe-2S] iron-sulfur cluster. It cycles between 2 conformational states during catalysis to transfer electrons from the quinol bound in the Q(0) site in cytochrome b to cytochrome c1. The chain is Cytochrome b-c1 complex subunit Rieske-2, mitochondrial from Nicotiana tabacum (Common tobacco).